Here is a 298-residue protein sequence, read N- to C-terminus: MTPLSTVVRAPATIANVGPGFDVFGLAVDGFHDVVEAHEADGVRIVTEDPIPTDPERNTAGRVALRMVEEFDLPGVSLEIRKGVPMGGLGSSAASAVAAAVAIDREFELGLEESELLRFAAEGERAAAGEPHYDNVAPCLLGGFVIWRFEREYVRLEVPGDLRFVTVTPTGVRVTTEEARKALRERPPSLDDVVNNLSAVALMVHALHEEDAETFARMVGWDRISEPVRKRFVPRYRELRETAYGTGALGFAISGAGPTVFAVCWREDAEDVRTALEDVLDGKCVSAVHRVSDGAEVA.

85 to 95 (PMGGLGSSAAS) lines the ATP pocket.

Belongs to the GHMP kinase family. Homoserine kinase subfamily.

It is found in the cytoplasm. It catalyses the reaction L-homoserine + ATP = O-phospho-L-homoserine + ADP + H(+). It functions in the pathway amino-acid biosynthesis; L-threonine biosynthesis; L-threonine from L-aspartate: step 4/5. Its function is as follows. Catalyzes the ATP-dependent phosphorylation of L-homoserine to L-homoserine phosphate. In Methanopyrus kandleri (strain AV19 / DSM 6324 / JCM 9639 / NBRC 100938), this protein is Homoserine kinase.